The chain runs to 448 residues: Asparagine--tRNA ligase (448 aa).

Belongs to the class-II aminoacyl-tRNA synthetase family. As to quaternary structure, homodimer.

The protein localises to the cytoplasm. It carries out the reaction tRNA(Asn) + L-asparagine + ATP = L-asparaginyl-tRNA(Asn) + AMP + diphosphate + H(+). This Streptococcus pyogenes serotype M12 (strain MGAS9429) protein is Asparagine--tRNA ligase.